The sequence spans 357 residues: uncharacterized protein (357 aa).

Residues 27–242 (HFGNTVTFER…VSSVRLNFPK (216 aa)) form the Radical SAM core domain. Residues Cys-44, Cys-50, and Cys-53 each coordinate [4Fe-4S] cluster.

Requires [4Fe-4S] cluster as cofactor.

This is an uncharacterized protein from Methanocaldococcus jannaschii (strain ATCC 43067 / DSM 2661 / JAL-1 / JCM 10045 / NBRC 100440) (Methanococcus jannaschii).